A 526-amino-acid polypeptide reads, in one-letter code: Protein MGF 505-2R (526 aa).

Belongs to the asfivirus MGF 505 family.

Plays a role in virus cell tropism, and may be required for efficient virus replication in macrophages. This African swine fever virus (isolate Pig/Kenya/KEN-50/1950) (ASFV) protein is Protein MGF 505-2R.